The sequence spans 246 residues: Peroxisomal membrane protein 11A (246 aa).

Topologically, residues 1–93 are cytoplasmic; the sequence is MDAFIRVANQ…LCLTLANLNR (93 aa). A helical membrane pass occupies residues 94–114; that stretch reads VVYYICDTVLWAKSVGLTSGV. Residues 115–217 are Lumenal-facing; that stretch reads NREKWQRWAA…LNQLGIYKSN (103 aa). Residues 218-238 form a helical membrane-spanning segment; it reads LGVVGLGGLISSLAGLLTVVY. Residues 218 to 238 form a required for homodimerization, interaction with PEX11G, and peroxisomal localization region; that stretch reads LGVVGLGGLISSLAGLLTVVY. At 239-246 the chain is on the cytoplasmic side; sequence PQLKLKAR.

The protein belongs to the peroxin-11 family. As to quaternary structure, homodimer. Heterodimer with PEX11G. Probably interacts with COPB2 and COPA. Interacts with PEX19. Interacts with FIS1. As to expression, strongly expressed in liver and at lower levels in heart, brain, kidney and testis.

The protein resides in the peroxisome membrane. Its function is as follows. May be involved in peroxisomal proliferation and may regulate peroxisomes division. May mediate binding of coatomer proteins to the peroxisomal membrane. Promotes membrane protrusion and elongation on the peroxisomal surface. In Mus musculus (Mouse), this protein is Peroxisomal membrane protein 11A (Pex11a).